A 450-amino-acid polypeptide reads, in one-letter code: Putative gustatory receptor 28a (450 aa).

Topologically, residues 1–47 (MAFKLWERFSQADNVFQALRPLTFISLLGLAPFRLNLNPRKEVQTSK) are cytoplasmic. The chain crosses the membrane as a helical span at residues 48 to 68 (FSFFAGIVHFLFFVLCFGISV). At 69–87 (KEGDSIIGYFFQTNITRFS) the chain is on the extracellular side. Asn-82 carries an N-linked (GlcNAc...) asparagine glycan. A helical membrane pass occupies residues 88–108 (DGTLRLTGILAMSTIFGFAMF). Residues 109-138 (KRQRLVSIIQNNIVVDEIFVRLGMKLDYRR) lie on the Cytoplasmic side of the membrane. The helical transmembrane segment at 139–159 (ILLSSFLISLGMLLFNVIYLC) threads the bilayer. Topologically, residues 160–171 (VSYSLLVSATIS) are extracellular. The chain crosses the membrane as a helical span at residues 172 to 192 (PSFVTFTTFALPHINISLMVF). The Cytoplasmic segment spans residues 193–292 (KFLCTTDLAR…CQTIEEYFTY (100 aa)). A helical membrane pass occupies residues 293-313 (PLLGIIAISFLFILFDDFYIL). Topologically, residues 314-329 (EAILNPKRLDVFEADE) are extracellular. The chain crosses the membrane as a helical span at residues 330–350 (FFAFFLMQLIWYIVIIVLIVE). Residues 351-407 (GSSRTILHSSYTAAIVHKILNITDDPELRDRLFRLSLQLSHRKVLFTAAGLFRLDRT) lie on the Cytoplasmic side of the membrane. A helical transmembrane segment spans residues 408–424 (LIFTITGAATCYLIILI). The Extracellular portion of the chain corresponds to 425–450 (QFRFTHHMDDTSSNSTNNLHSIHLGD). N-linked (GlcNAc...) asparagine glycosylation occurs at Asn-438.

It belongs to the insect chemoreceptor superfamily. Gustatory receptor (GR) family. Gr2a subfamily. As to expression, in addition to expression in a large number of taste neurons, Gr28a is also expressed in a few nonchemosensory neurons, including the campaniform sensilla of the wing, leg stretch receptors, and multiple dendritic (MD) neurons in the abdomen. In larvea, is expressed in neurons of the terminal external chemosensory organ, the dorsal external chemosensory organ, as well as in the ventral and posterior pharyngeal sense organ.

It localises to the cell membrane. Probable gustatory receptor which mediates acceptance or avoidance behavior, depending on its substrates. Atypical expression also suggests nongustatory roles in the nervous system and tissues involved in proprioception, hygroreception, and other sensory modalities. It is also possible that it has chemosensory roles in the detection of internal ligands. The chain is Putative gustatory receptor 28a (Gr28a) from Drosophila melanogaster (Fruit fly).